The primary structure comprises 315 residues: Prephenate dehydratase (315 aa).

The Prephenate dehydratase domain occupies 3–190 (RIAYLGPQGT…ARTRFVLVGR (188 aa)). Residues 204–281 (SVALRLPNTP…EDVRYLGSWP (78 aa)) form the ACT domain.

In terms of assembly, homodimer.

It carries out the reaction prephenate + H(+) = 3-phenylpyruvate + CO2 + H2O. The protein operates within amino-acid biosynthesis; L-phenylalanine biosynthesis; phenylpyruvate from prephenate: step 1/1. This is Prephenate dehydratase (pheA) from Mycobacterium sp. (strain JLS).